The sequence spans 355 residues: 3-dehydroquinate synthase (355 aa).

NAD(+)-binding positions include 98–102, 122–123, Lys135, Lys144, and 162–165; these read GVVGD, TT, and TLDT. The Zn(2+) site is built by Glu177, His240, and His257.

This sequence belongs to the sugar phosphate cyclases superfamily. Dehydroquinate synthase family. Co(2+) is required as a cofactor. It depends on Zn(2+) as a cofactor. The cofactor is NAD(+).

The protein localises to the cytoplasm. The catalysed reaction is 7-phospho-2-dehydro-3-deoxy-D-arabino-heptonate = 3-dehydroquinate + phosphate. It functions in the pathway metabolic intermediate biosynthesis; chorismate biosynthesis; chorismate from D-erythrose 4-phosphate and phosphoenolpyruvate: step 2/7. In terms of biological role, catalyzes the conversion of 3-deoxy-D-arabino-heptulosonate 7-phosphate (DAHP) to dehydroquinate (DHQ). The chain is 3-dehydroquinate synthase from Dictyoglomus turgidum (strain DSM 6724 / Z-1310).